Reading from the N-terminus, the 941-residue chain is Translation initiation factor IF-2 (941 aa).

Residues aspartate 170–lysine 209 are compositionally biased toward basic and acidic residues. Disordered stretches follow at residues aspartate 170–alanine 228 and arginine 252–glutamine 351. The span at alanine 256–glutamate 269 shows a compositional bias: low complexity. Residues threonine 271–serine 297 are compositionally biased toward basic and acidic residues. Residues lysine 299 to glutamine 308 are compositionally biased toward polar residues. Residues proline 441 to lysine 610 form the tr-type G domain. Positions glycine 450 to threonine 457 are G1. Glycine 450 to threonine 457 serves as a coordination point for GTP. Residues glycine 475–histidine 479 are G2. Residues aspartate 496–glycine 499 form a G3 region. GTP contacts are provided by residues aspartate 496–histidine 500 and asparagine 550–aspartate 553. The interval asparagine 550–aspartate 553 is G4. Residues serine 586–lysine 588 form a G5 region.

Belongs to the TRAFAC class translation factor GTPase superfamily. Classic translation factor GTPase family. IF-2 subfamily.

It is found in the cytoplasm. Functionally, one of the essential components for the initiation of protein synthesis. Protects formylmethionyl-tRNA from spontaneous hydrolysis and promotes its binding to the 30S ribosomal subunits. Also involved in the hydrolysis of GTP during the formation of the 70S ribosomal complex. The polypeptide is Translation initiation factor IF-2 (Herminiimonas arsenicoxydans).